Reading from the N-terminus, the 1163-residue chain is AF4/FMR2 family member 4 (1163 aa).

Over residues Met-1–Gln-19 the composition is skewed to basic and acidic residues. Disordered stretches follow at residues Met-1–Leu-48, Ala-76–Asp-312, Thr-324–Thr-904, and Asn-1034–Ala-1073. Residues Pro-115 to Gln-128 show a composition bias toward polar residues. A Phosphoserine modification is found at Ser-120. Composition is skewed to low complexity over residues Ser-129 to Gly-148 and Arg-177 to His-194. The span at His-198 to Asp-217 shows a compositional bias: basic and acidic residues. At Ser-212 the chain carries Phosphoserine. 3 stretches are compositionally biased toward polar residues: residues Pro-227 to Gln-251, Glu-273 to Thr-285, and Lys-350 to Gln-375. Phosphoserine occurs at positions 387, 388, 389, and 392. Residues Pro-403 to Glu-412 show a composition bias toward polar residues. A compositionally biased stretch (basic and acidic residues) spans Pro-413–Ser-429. Residues Ser-430–Pro-462 are compositionally biased toward low complexity. 3 positions are modified to phosphoserine: Ser-487, Ser-490, and Ser-491. 3 stretches are compositionally biased toward polar residues: residues Pro-488–Gly-501, Gly-510–Thr-528, and Ser-549–Arg-560. Phosphoserine is present on Ser-549. Basic and acidic residues predominate over residues Lys-568–Ser-586. A Glycyl lysine isopeptide (Lys-Gly) (interchain with G-Cter in SUMO2) cross-link involves residue Lys-583. Over residues Ser-599–Asn-612 the composition is skewed to basic residues. Positions Ile-613–Lys-627 are enriched in basic and acidic residues. Phosphoserine is present on Ser-671. Thr-674 carries the post-translational modification Phosphothreonine. A phosphoserine mark is found at Ser-680, Ser-694, Ser-703, and Ser-706. A Phosphotyrosine modification is found at Tyr-712. Basic and acidic residues-rich tracts occupy residues Pro-730 to Ser-761, Lys-769 to Ser-789, and Glu-799 to Leu-811. A Phosphoserine modification is found at Ser-814. N6-acetyllysine is present on Lys-822. 5 positions are modified to phosphoserine: Ser-836, Ser-1043, Ser-1055, Ser-1058, and Ser-1062. Residues Ser-836 to Ser-862 show a composition bias toward low complexity. A compositionally biased stretch (low complexity) spans Ser-1062–Ala-1073.

This sequence belongs to the AF4 family. Component of the super elongation complex (SEC), at least composed of EAF1, EAF2, CDK9, MLLT3/AF9, AFF (AFF1 or AFF4), the P-TEFb complex and ELL (ELL, ELL2 or ELL3). Interacts with ELL3; the interaction is direct. Interacts with ELL2; the interaction is direct and leads to stabilize ELL2 and prevent ELL2 ubiquitination and degradation. In terms of processing, dephosphorylated at Ser-549 by the PNUTS-PP1 complex, promoting RNA polymerase II transcription pause-release. Ubiquitously expressed. Strongly expressed in heart, placenta, skeletal muscle, pancreas and to a lower extent in brain.

Its subcellular location is the nucleus. The protein resides in the chromosome. Functionally, key component of the super elongation complex (SEC), a complex required to increase the catalytic rate of RNA polymerase II transcription by suppressing transient pausing by the polymerase at multiple sites along the DNA. In the SEC complex, AFF4 acts as a central scaffold that recruits other factors through direct interactions with ELL proteins (ELL, ELL2 or ELL3) and the P-TEFb complex. In case of infection by HIV-1 virus, the SEC complex is recruited by the viral Tat protein to stimulate viral gene expression. In Homo sapiens (Human), this protein is AF4/FMR2 family member 4 (AFF4).